Consider the following 675-residue polypeptide: Neurexin-3b-beta (675 aa).

Residues 1–30 (MRPHFKTRYPQWLSCMLPLVTGCVFGAVWG) form the signal peptide. Residues 31–599 (SNLDSTVVLS…EVIRESSSTT (569 aa)) lie on the Extracellular side of the membrane. The 201-residue stretch at 81–281 (ATYIFGKGGG…HANIKINGSV (201 aa)) folds into the Laminin G-like domain. 2 disordered regions span residues 313 to 337 (TTLS…DIVS) and 490 to 534 (FKPK…MNNR). Polar residues predominate over residues 325–335 (SPPTIQTTDDI). Residues 600-620 (GMVVGIVSAAALCILILLYAM) form a helical membrane-spanning segment. Residues 621-675 (YKYRNRDEGSYQVDETRNYISNSAQNNGTVVKDKQPSTKGASNKRPKDKDKEYYV) are Cytoplasmic-facing. A disordered region spans residues 642 to 675 (NSAQNNGTVVKDKQPSTKGASNKRPKDKDKEYYV). A compositionally biased stretch (basic and acidic residues) spans 665–675 (RPKDKDKEYYV).

Belongs to the neurexin family. Processed by alpha-secretase leading to the formation of an extracellular soluble protein as well as a C-terminal membrane-embedded fragment (CTF). Proteolysis of these CTFs by gamma-secretase releases intracellular domains (ICDs) and extracellular peptides.

Its subcellular location is the membrane. In terms of biological role, neuronal cell surface protein that may be involved in cell recognition and cell adhesion. The sequence is that of Neurexin-3b-beta (nrxn3b) from Danio rerio (Zebrafish).